We begin with the raw amino-acid sequence, 342 residues long: Cilia- and flagella-associated protein 36 (342 aa).

Residues Ser-85 and Ser-147 each carry the phosphoserine modification. Residues 150–187 are a coiled coil; it reads EHEEMKILREVLRKSKEEYDQEEERKRKKQLSEAKTEE. Positions 166 to 194 are disordered; it reads EEYDQEEERKRKKQLSEAKTEEPTVHSSE. The span at 179–189 shows a compositional bias: basic and acidic residues; the sequence is QLSEAKTEEPT. Residue Ser-201 is modified to Phosphoserine. 2 disordered regions span residues 229–250 and 282–322; these read RKVE…PGLE and KLMS…AEEK. 2 stretches are compositionally biased toward basic and acidic residues: residues 282–292 and 300–322; these read KLMSMRKDMRT and QKGK…AEEK.

The protein belongs to the CFAP36 family. As to quaternary structure, interacts with ARL3. As to expression, expressed in several human tissues including brain, testis, heart, lung, pancreas and spleen (at protein level).

It localises to the nucleus. It is found in the cytoplasm. The protein resides in the cell projection. The protein localises to the cilium. Its subcellular location is the flagellum. In terms of biological role, may act as an effector for ARL3. This chain is Cilia- and flagella-associated protein 36 (CFAP36), found in Homo sapiens (Human).